The primary structure comprises 110 residues: Class I hydrophobin 2 (110 aa).

An N-terminal signal peptide occupies residues 1–17 (MQFKFLTTVALATLAVA). Disulfide bonds link C28–C89, C36–C83, C37–C71, and C90–C103. N-linked (GlcNAc...) asparagine glycosylation is present at N57.

It belongs to the fungal hydrophobin family. In terms of assembly, self-assembles to form functional amyloid fibrils called rodlets. Self-assembly into fibrillar rodlets occurs spontaneously at hydrophobic:hydrophilic interfaces and the rodlets further associate laterally to form amphipathic monolayers.

The protein localises to the secreted. Its subcellular location is the cell wall. Aerial growth, conidiation, and dispersal of filamentous fungi in the environment rely upon a capability of their secreting small amphipathic proteins called hydrophobins (HPBs) with low sequence identity. Class I can self-assemble into an outermost layer of rodlet bundles on aerial cell surfaces, conferring cellular hydrophobicity that supports fungal growth, development and dispersal; whereas Class II form highly ordered films at water-air interfaces through intermolecular interactions but contribute nothing to the rodlet structure. CoH2 is an asexual monokaryon-specific class I hydrophobin that is involved in aerial growth of mycelia. The sequence is that of Class I hydrophobin 2 from Coprinopsis cinerea (Inky cap fungus).